Here is a 243-residue protein sequence, read N- to C-terminus: uncharacterized protein (243 aa).

Residues 1-18 (MSNSHYNNYQQQQPHSSN) are compositionally biased toward low complexity. Positions 1–30 (MSNSHYNNYQQQQPHSSNGDPEYQHQQMVH) are disordered. In terms of domain architecture, AMMECR1 spans 38–232 (GHGMKTVAVP…MHYKEYREYQ (195 aa)).

This is an uncharacterized protein from Drosophila melanogaster (Fruit fly).